We begin with the raw amino-acid sequence, 329 residues long: MAQSTLYSRVLGTGSYLPPDRVTNQELADRLAKDGIETSDEWIVARTGIHARHFAAPDVTTSDLAFVAAQRAIEAADVDPQSIDLIIVATSTPDFVFPSTACLLQNKLGIKNGGAAFDVQAVCSGFAYALAMADSFIRTGQHRTALIVGAETFSRILDFKDRTTCVLFGDGAGAVVLSASEEPGILGSALHADGSYSNILCTPGNVNRGVIAGSAFLHMDGQAVFKLAVNVLEKVAVEALSKAALAPEQIDWLIPHQANIRIMTSTCRKLGLPQERMIVTVDEHGNTSAASIPLALDVAVRDGRIKRGQHVLIEGVGGGFTWGASVFRY.

Active-site residues include C123 and H256. The interval 257–261 (QANIR) is ACP-binding. The active site involves N286.

This sequence belongs to the thiolase-like superfamily. FabH family. In terms of assembly, homodimer.

The protein localises to the cytoplasm. It catalyses the reaction malonyl-[ACP] + acetyl-CoA + H(+) = 3-oxobutanoyl-[ACP] + CO2 + CoA. Its pathway is lipid metabolism; fatty acid biosynthesis. Its function is as follows. Catalyzes the condensation reaction of fatty acid synthesis by the addition to an acyl acceptor of two carbons from malonyl-ACP. Catalyzes the first condensation reaction which initiates fatty acid synthesis and may therefore play a role in governing the total rate of fatty acid production. Possesses both acetoacetyl-ACP synthase and acetyl transacylase activities. Its substrate specificity determines the biosynthesis of branched-chain and/or straight-chain of fatty acids. The protein is Beta-ketoacyl-[acyl-carrier-protein] synthase III of Burkholderia thailandensis (strain ATCC 700388 / DSM 13276 / CCUG 48851 / CIP 106301 / E264).